The chain runs to 100 residues: Urease subunit gamma (100 aa).

Belongs to the urease gamma subunit family. In terms of assembly, heterotrimer of UreA (gamma), UreB (beta) and UreC (alpha) subunits. Three heterotrimers associate to form the active enzyme.

It is found in the cytoplasm. The catalysed reaction is urea + 2 H2O + H(+) = hydrogencarbonate + 2 NH4(+). The protein operates within nitrogen metabolism; urea degradation; CO(2) and NH(3) from urea (urease route): step 1/1. Expression of the urease operon increases the likelihood of bacterial survival by contributing to acid resistance in vitro and in vivo in BALB/c mice. Y.enterocolitica enters the body via an oral path and must survive the acidic stomach before being able to colonize the intestinal mucosa. In Yersinia enterocolitica, this protein is Urease subunit gamma.